The sequence spans 247 residues: Flagellar brake protein YcgR 2 (247 aa).

The region spanning 124–237 is the PilZ domain; that stretch reads QRREYFRVET…DETRIQRYIA (114 aa).

The protein belongs to the YcgR family. In terms of assembly, monomer. Interacts with the flagellar basal bodies.

It is found in the bacterial flagellum basal body. Its function is as follows. Acts as a flagellar brake, regulating swimming and swarming in a bis-(3'-5') cyclic diguanylic acid (c-di-GMP)-dependent manner. Binds 1 c-di-GMP dimer per subunit. Increasing levels of c-di-GMP lead to decreased motility. This is Flagellar brake protein YcgR 2 from Dechloromonas aromatica (strain RCB).